The chain runs to 310 residues: MVASEKSKILIIGGTGYIGKYLVETSAKSGHPTFVLIRESTLKNPQKSKLIDTFKSYGVTLLFGDISNQESLLKAIKQVDVVISTVGGQQFADQVNIINAIKEAGNIKRFLPSEFGFDVDHAHAIEPAASLFALKVKIRRMIEAEGIPYTYVICNWFADFFLPNLGHLDAKTPPRDKVVIFGDGNPKAIYVKEEDIATYTIEAVDDPRTLNKTLHMRPPANILSFNEVVSLWEEKIGKTLEKIYLSEEDILEIVKEGPLPLRTNLAICHSVFVNGDSANFEVQPPTGVEATELYPKVKYTTVDEFYNKFV.

NADP(+) contacts are provided by residues 13-19 (GGTGYIG), R38, and K47. The Proton acceptor role is filled by K135. An NADP(+)-binding site is contributed by R139.

The protein belongs to the NmrA-type oxidoreductase family. Isoflavone reductase subfamily. In terms of assembly, monomer.

It localises to the cytoplasm. It participates in alkaloid biosynthesis; nicotine biosynthesis. Its function is as follows. NADPH-binding protein. Involved in the biosynthesis of pyridine alkaloid natural products, leading mainly to the production of anabasine, anatabine, nicotine and nornicotine, effective deterrents against herbivores with antiparasitic and pesticide properties (neurotoxins); nornicotine serves as the precursor in the synthesis of the carcinogen compound N'-nitrosonornicotine (NNN). Reductase involved in a late step of tobacco alkaloid biosynthesis. Triggers either the formation of a nicotinic acid-derived precursor or the final condensation reaction of tobacco alkaloids. The chain is Isoflavone reductase homolog A622 from Nicotiana glauca (Glaucous tobacco).